A 145-amino-acid chain; its full sequence is uncharacterized protein (145 aa).

A helical transmembrane segment spans residues 46 to 66 (FFFLFFLFFFFFFTFQFLVAF).

The protein localises to the membrane. This is an uncharacterized protein from Saccharomyces cerevisiae (strain ATCC 204508 / S288c) (Baker's yeast).